The sequence spans 490 residues: MKNLEPWEAVIGLETHVQLNTKSKIFTAASTAFGDEPNTHIDPVVCGLPGTLPVLNKTVLEYAVKTSLALNLNVAEHCKFDRKQYFYPDLPKNYQISQFDEPLAENGWLEVEIAEKDKETYLKKIGIERLHMEEDAGKLVHIGSDRLAGSKYSLVDYNRAGIALVEIVSKPDIRTGREASEYASEIRRTVRYLGVSDGNMQEGSLRCDVNISVRRGPNAPFGTKVEIKNMNSFSAIQKACEYEIERQIDVYENGGEIYQETRLWDEAKQLTKSMRLKEGSSDYRYFPDPDLGPIEISKEQKDQWLDELPELPSKKRQKYVKELGLSPYDSRVISDEVFMANFFEETVANGADPKLASNWITSDIVGYLKSNKQSFAELKLSPINLAEMINMISKKVISGKIAKEILPELIQDNISPQKVVEEKGLAMISDSASISPIIEELIIEYPKEVKSFKDGKTKLLGFFVGQLMKKTKGKADPKLANKLISEKLNS.

This sequence belongs to the GatB/GatE family. GatB subfamily. In terms of assembly, heterotrimer of A, B and C subunits.

It carries out the reaction L-glutamyl-tRNA(Gln) + L-glutamine + ATP + H2O = L-glutaminyl-tRNA(Gln) + L-glutamate + ADP + phosphate + H(+). The catalysed reaction is L-aspartyl-tRNA(Asn) + L-glutamine + ATP + H2O = L-asparaginyl-tRNA(Asn) + L-glutamate + ADP + phosphate + 2 H(+). Functionally, allows the formation of correctly charged Asn-tRNA(Asn) or Gln-tRNA(Gln) through the transamidation of misacylated Asp-tRNA(Asn) or Glu-tRNA(Gln) in organisms which lack either or both of asparaginyl-tRNA or glutaminyl-tRNA synthetases. The reaction takes place in the presence of glutamine and ATP through an activated phospho-Asp-tRNA(Asn) or phospho-Glu-tRNA(Gln). The polypeptide is Aspartyl/glutamyl-tRNA(Asn/Gln) amidotransferase subunit B (Prochlorococcus marinus subsp. pastoris (strain CCMP1986 / NIES-2087 / MED4)).